A 298-amino-acid polypeptide reads, in one-letter code: tRNA pseudouridine synthase B (298 aa).

Catalysis depends on aspartate 45, which acts as the Nucleophile.

It belongs to the pseudouridine synthase TruB family. Type 1 subfamily.

The enzyme catalyses uridine(55) in tRNA = pseudouridine(55) in tRNA. In terms of biological role, responsible for synthesis of pseudouridine from uracil-55 in the psi GC loop of transfer RNAs. The sequence is that of tRNA pseudouridine synthase B from Thiobacillus denitrificans (strain ATCC 25259 / T1).